Here is an 838-residue protein sequence, read N- to C-terminus: Semaphorin-4G (838 aa).

Positions 1–17 (MWGRLWPLLLSILTATA) are cleaved as a signal peptide. The Extracellular portion of the chain corresponds to 18–675 (VPGPSLRRPS…GAQLAPDVRL (658 aa)). Residues 35 to 505 (RMTIPYEELS…APSGVIQLPL (471 aa)) enclose the Sema domain. Residues Asn55, Asn111, and Asn126 are each glycosylated (N-linked (GlcNAc...) asparagine). The cysteines at positions 104 and 115 are disulfide-linked. 3 disulfide bridges follow: Cys133–Cys142, Cys270–Cys377, and Cys294–Cys337. Residue Asn388 is glycosylated (N-linked (GlcNAc...) asparagine). The PSI domain occupies 507–558 (SCSRYRSCYDCILARDPYCGWDPGTHACAAATTIANRTALIQDIERGNRGCE). 2 cysteine pairs are disulfide-bonded: Cys508–Cys525 and Cys517–Cys534. N-linked (GlcNAc...) asparagine glycosylation is found at Asn542 and Asn598. The Ig-like C2-type domain occupies 567 to 649 (PPLKTRSVLR…RTLLASYSLT (83 aa)). An intrachain disulfide couples Cys584 to Cys632. The chain crosses the membrane as a helical span at residues 676-696 (LYVLAIAALGGLCLILASSLL). Residues 697-838 (YVACLREGRR…LVEQLDESSV (142 aa)) are Cytoplasmic-facing. The segment at 723–777 (SAVQLQTVSGQCPGEEDEGDDEGAGGLEGSCLQIIPGEGAPAPPPPPPPPPPAEL) is disordered. Residues 736–745 (GEEDEGDDEG) are compositionally biased toward acidic residues. Positions 763-775 (PAPPPPPPPPPPA) are enriched in pro residues. 2 positions are modified to phosphoserine: Ser795 and Ser837.

Belongs to the semaphorin family. In terms of assembly, interacts with PLXNB2.

Its subcellular location is the cell membrane. Its function is as follows. Cell surface receptor for PLXNB2. May play a role in axon guidance. The polypeptide is Semaphorin-4G (SEMA4G) (Homo sapiens (Human)).